A 471-amino-acid polypeptide reads, in one-letter code: Amidophosphoribosyltransferase (471 aa).

The Nucleophile role is filled by Cys-2. The Glutamine amidotransferase type-2 domain maps to 2-224 (CGIFGIYSYE…PGEIIEIKDG (223 aa)). Position 255 (Cys-255) interacts with [4Fe-4S] cluster. Residues Ser-302, Asp-364, and Asp-365 each coordinate Mg(2+). [4Fe-4S] cluster contacts are provided by Cys-401, Cys-450, and Cys-453.

In the C-terminal section; belongs to the purine/pyrimidine phosphoribosyltransferase family. It depends on Mg(2+) as a cofactor. Requires [4Fe-4S] cluster as cofactor.

It carries out the reaction 5-phospho-beta-D-ribosylamine + L-glutamate + diphosphate = 5-phospho-alpha-D-ribose 1-diphosphate + L-glutamine + H2O. It functions in the pathway purine metabolism; IMP biosynthesis via de novo pathway; N(1)-(5-phospho-D-ribosyl)glycinamide from 5-phospho-alpha-D-ribose 1-diphosphate: step 1/2. Its function is as follows. Catalyzes the formation of phosphoribosylamine from phosphoribosylpyrophosphate (PRPP) and glutamine. The chain is Amidophosphoribosyltransferase from Methanocaldococcus jannaschii (strain ATCC 43067 / DSM 2661 / JAL-1 / JCM 10045 / NBRC 100440) (Methanococcus jannaschii).